A 383-amino-acid chain; its full sequence is 1-deoxy-D-xylulose 5-phosphate reductoisomerase (383 aa).

8 residues coordinate NADPH: T10, G11, S12, I13, G36, K37, N38, and N122. K123 is a binding site for 1-deoxy-D-xylulose 5-phosphate. E124 contacts NADPH. D148 is a Mn(2+) binding site. 1-deoxy-D-xylulose 5-phosphate is bound by residues S149, E150, S174, and H197. E150 is a binding site for Mn(2+). Position 203 (G203) interacts with NADPH. 1-deoxy-D-xylulose 5-phosphate-binding residues include S210, N215, K216, and E219. E219 serves as a coordination point for Mn(2+).

This sequence belongs to the DXR family. Mg(2+) serves as cofactor. The cofactor is Mn(2+).

The enzyme catalyses 2-C-methyl-D-erythritol 4-phosphate + NADP(+) = 1-deoxy-D-xylulose 5-phosphate + NADPH + H(+). The protein operates within isoprenoid biosynthesis; isopentenyl diphosphate biosynthesis via DXP pathway; isopentenyl diphosphate from 1-deoxy-D-xylulose 5-phosphate: step 1/6. In terms of biological role, catalyzes the NADPH-dependent rearrangement and reduction of 1-deoxy-D-xylulose-5-phosphate (DXP) to 2-C-methyl-D-erythritol 4-phosphate (MEP). The chain is 1-deoxy-D-xylulose 5-phosphate reductoisomerase from Bacillus licheniformis (strain ATCC 14580 / DSM 13 / JCM 2505 / CCUG 7422 / NBRC 12200 / NCIMB 9375 / NCTC 10341 / NRRL NRS-1264 / Gibson 46).